The chain runs to 273 residues: BTB and MATH domain-containing protein 15 (273 aa).

Residues Glu-7–Val-123 enclose the MATH domain. Positions Ser-147–Tyr-206 constitute a BTB domain.

In terms of assembly, interacts with cul-3.

It participates in protein modification; protein ubiquitination. Functionally, probable substrate-specific adapter of an E3 ubiquitin-protein ligase complex which mediates the ubiquitination and subsequent proteasomal degradation of target proteins. This chain is BTB and MATH domain-containing protein 15 (bath-15), found in Caenorhabditis elegans.